The chain runs to 516 residues: Putative protein NRT1/ PTR FAMILY 2.2 (516 aa).

A run of 11 helical transmembrane segments spans residues 31–51 (TLLG…VFLI), 67–87 (IVNG…DSFF), 90–110 (IPVI…LTMI), 138–158 (ILYI…FTLA), 174–194 (FFNW…TAIV), 201–221 (SWKL…IVFV), 320–340 (LLLA…LIIL), 362–382 (VIVI…VYPM), 394–414 (LQKV…SAIV), 437–457 (FIAS…ITLI), and 476–496 (VYWL…AWFY).

The protein belongs to the major facilitator superfamily. Proton-dependent oligopeptide transporter (POT/PTR) (TC 2.A.17) family. In terms of tissue distribution, not detected.

The protein resides in the membrane. Functionally, transporter involved in a passive nitrate efflux. The chain is Putative protein NRT1/ PTR FAMILY 2.2 (NPF2.2) from Arabidopsis thaliana (Mouse-ear cress).